Consider the following 277-residue polypeptide: NH(3)-dependent NAD(+) synthetase (277 aa).

36-43 lines the ATP pocket; it reads GLSGGIDS. Mg(2+) is bound at residue Asp42. Position 118 (Arg118) interacts with deamido-NAD(+). Position 138 (Thr138) interacts with ATP. Glu143 provides a ligand contact to Mg(2+). Residues Lys167 and Ser189 each contribute to the ATP site.

Belongs to the NAD synthetase family. As to quaternary structure, homodimer.

It catalyses the reaction deamido-NAD(+) + NH4(+) + ATP = AMP + diphosphate + NAD(+) + H(+). Its pathway is cofactor biosynthesis; NAD(+) biosynthesis; NAD(+) from deamido-NAD(+) (ammonia route): step 1/1. Functionally, catalyzes the ATP-dependent amidation of deamido-NAD to form NAD. Uses ammonia as a nitrogen source. This Chlorobium phaeobacteroides (strain DSM 266 / SMG 266 / 2430) protein is NH(3)-dependent NAD(+) synthetase.